Here is a 243-residue protein sequence, read N- to C-terminus: Sec-independent protein translocase protein TATB, chloroplastic (243 aa).

The transit peptide at 1 to 67 directs the protein to the chloroplast; sequence MTPTANLLLP…SRTRRRNVIC (67 aa). Residues 68-69 lie on the Lumenal side of the membrane; sequence AS. Residues 70-90 traverse the membrane as a helical segment; sequence LFGVGAPEALVIGVVALLVFG. Residues 91–243 are Stromal-facing; the sequence is PKGLAEVARN…NKSQKAEGER (153 aa). Disordered stretches follow at residues 129–165 and 178–243; these read EIGIDEVSQSTNYRPTTMNNNQQPAADPNVKPEPAPY and IAAS…EGER. Polar residues-rich tracts occupy residues 135-152 and 187-204; these read VSQSTNYRPTTMNNNQQP and NPQQPATSQQQEEAPTTP.

The protein belongs to the TatB family. In thylakoid membranes, TATC and TATB form a large receptor complex, containing about eight TATC-TATB pairs, which binds the precursor protein. Twin arginine signal peptide promotes pH-triggered docking of TATA oligomers to TATC-TATB receptor complex, inducing a conformational switch of TATA that results in activation of the translocase. TATA dissociates from TATC-TATB upon completion of translocation.

Its subcellular location is the plastid. It localises to the chloroplast thylakoid membrane. Part of the twin-arginine translocation (Tat) system that transports large folded proteins containing a characteristic twin-arginine motif in their signal peptide across the thylakoid membrane. Involved in delta pH-dependent protein transport required for chloroplast development, especially thylakoid membrane formation. TATC and TATB mediate precursor recognition, whereas TATA facilitates translocation. The sequence is that of Sec-independent protein translocase protein TATB, chloroplastic from Zea mays (Maize).